We begin with the raw amino-acid sequence, 266 residues long: Streptomycin 3''-kinase (266 aa).

Residue D154 is the Proton acceptor of the active site.

The protein belongs to the aminoglycoside phosphotransferase family.

It catalyses the reaction streptomycin + ATP = streptomycin 3''-phosphate + ADP + H(+). In terms of biological role, the aminoglycoside phosphotransferases achieve inactivation of their antibiotic substrates by phosphorylation. The sequence is that of Streptomycin 3''-kinase (str) from Klebsiella pneumoniae.